The sequence spans 351 residues: Uroporphyrinogen decarboxylase (351 aa).

Residues 25–29 (RQAGR), Asp-74, Tyr-151, Ser-206, and His-325 contribute to the substrate site.

This sequence belongs to the uroporphyrinogen decarboxylase family. In terms of assembly, homodimer.

It is found in the cytoplasm. It carries out the reaction uroporphyrinogen III + 4 H(+) = coproporphyrinogen III + 4 CO2. It participates in porphyrin-containing compound metabolism; protoporphyrin-IX biosynthesis; coproporphyrinogen-III from 5-aminolevulinate: step 4/4. In terms of biological role, catalyzes the decarboxylation of four acetate groups of uroporphyrinogen-III to yield coproporphyrinogen-III. The polypeptide is Uroporphyrinogen decarboxylase (Chlorobaculum parvum (strain DSM 263 / NCIMB 8327) (Chlorobium vibrioforme subsp. thiosulfatophilum)).